Consider the following 256-residue polypeptide: MAYSLPTFPQALPCSSTKTSSSLATFRSPFLRFNGSTSLIPSSISITSRGTSSPTIIPRAAASESDSNEALANTTFHGLCYVLKDNIDTDQIIPAGAACTFPSNQQERDEIAAHALSGLPDFHKTRFIEPGENRSKYSIIIGGENFGCGSSREHAPVCLGAAGAKAIVAESYARIFFRNSVATGEVFPLESEVRVCEECKTGDTVTIELSDSGGLLTNHTTGKNYKLKSIGDAGPVIDAGGIFAYARMMGMIPSLA.

The N-terminal 59 residues, 1-59, are a transit peptide targeting the chloroplast; it reads MAYSLPTFPQALPCSSTKTSSSLATFRSPFLRFNGSTSLIPSSISITSRGTSSPTIIPR.

It belongs to the LeuD family. In terms of assembly, heterodimer of the large LEUC/IIL1 subunit and the small LEUD (SSU1, SSU2 or SSU3) subunits. In terms of tissue distribution, expressed in vascular bundles of roots, cotyledons and rosette leaves. Expressed in stem vascular bundles which branche off into lateral inflorescences. Expressed in connective tissues in anthers. In young seedlings, expressed in cotyledon epidermal cells and vasculare bundles. In hypocotyls, expressed in parenchyma cells surrounding the vasculature and further peripheral cells. In seedling roots, expressed in cells along the vasculature. In roots of adult plants, expressed in cells closely associated with the stele. In flowering stalks, expressed in parenchyma cells associated with the phloem or the xylem. Expressed in the vasculature of sepals and petals.

It is found in the plastid. The protein resides in the chloroplast stroma. It catalyses the reaction (2R,3S)-3-isopropylmalate = (2S)-2-isopropylmalate. The enzyme catalyses a 2-(omega-methylsulfanyl)alkylmalate = a 2-(omega-methylsulfanyl)alkylmaleate + H2O. It carries out the reaction 2-(3-methylsulfanyl)propylmalate = 2-(2-methylsulfanyl)propylmaleate + H2O. The catalysed reaction is a 3-(omega-methylsulfanyl)alkylmalate = a 2-(omega-methylsulfanyl)alkylmaleate + H2O. It catalyses the reaction 2-(2-methylsulfanyl)ethylmalate = 2-(2-methylsulfanyl)ethylmaleate + H2O. The enzyme catalyses 3-(2-methylsulfanyl)ethylmalate = 2-(2-methylsulfanyl)ethylmaleate + H2O. It carries out the reaction 3-(3-methylsulfanyl)propylmalate = 2-(2-methylsulfanyl)propylmaleate + H2O. Its pathway is amino-acid biosynthesis; L-leucine biosynthesis; L-leucine from 3-methyl-2-oxobutanoate: step 2/4. In terms of biological role, catalyzes the isomerization between 2-isopropylmalate and 3-isopropylmalate, via the formation of 2-isopropylmaleate. Functions redundantly with LEUD2 in the methionine chain elongation pathway of aliphatic glucosinolate formation. The sequence is that of 3-isopropylmalate dehydratase small subunit 2 from Arabidopsis thaliana (Mouse-ear cress).